The chain runs to 491 residues: Glutamyl-tRNA(Gln) amidotransferase subunit A (491 aa).

Active-site charge relay system residues include lysine 78 and serine 158. Residue serine 182 is the Acyl-ester intermediate of the active site.

Belongs to the amidase family. GatA subfamily. Heterotrimer of A, B and C subunits.

The catalysed reaction is L-glutamyl-tRNA(Gln) + L-glutamine + ATP + H2O = L-glutaminyl-tRNA(Gln) + L-glutamate + ADP + phosphate + H(+). Functionally, allows the formation of correctly charged Gln-tRNA(Gln) through the transamidation of misacylated Glu-tRNA(Gln) in organisms which lack glutaminyl-tRNA synthetase. The reaction takes place in the presence of glutamine and ATP through an activated gamma-phospho-Glu-tRNA(Gln). This chain is Glutamyl-tRNA(Gln) amidotransferase subunit A, found in Bradyrhizobium sp. (strain ORS 278).